We begin with the raw amino-acid sequence, 718 residues long: Ribosomal RNA large subunit methyltransferase K/L (718 aa).

One can recognise a THUMP domain in the interval 44-155 (DAYKVCIYSY…KQFVNVFLCL (112 aa)).

It belongs to the methyltransferase superfamily. RlmKL family.

The protein localises to the cytoplasm. It catalyses the reaction guanosine(2445) in 23S rRNA + S-adenosyl-L-methionine = N(2)-methylguanosine(2445) in 23S rRNA + S-adenosyl-L-homocysteine + H(+). It carries out the reaction guanosine(2069) in 23S rRNA + S-adenosyl-L-methionine = N(2)-methylguanosine(2069) in 23S rRNA + S-adenosyl-L-homocysteine + H(+). Functionally, specifically methylates the guanine in position 2445 (m2G2445) and the guanine in position 2069 (m7G2069) of 23S rRNA. The polypeptide is Ribosomal RNA large subunit methyltransferase K/L (Francisella tularensis subsp. novicida (strain U112)).